Here is a 206-residue protein sequence, read N- to C-terminus: dCTP deaminase, dUMP-forming (206 aa).

Residues arginine 117–arginine 122, aspartate 135, threonine 143–glutamate 145, glutamine 163, tyrosine 177, lysine 184, and glutamine 188 each bind dCTP. Glutamate 145 functions as the Proton donor/acceptor in the catalytic mechanism.

It belongs to the dCTP deaminase family. As to quaternary structure, homotrimer.

The catalysed reaction is dCTP + 2 H2O = dUMP + NH4(+) + diphosphate. It functions in the pathway pyrimidine metabolism; dUMP biosynthesis; dUMP from dCTP: step 1/1. Functionally, bifunctional enzyme that catalyzes both the deamination of dCTP to dUTP and the hydrolysis of dUTP to dUMP without releasing the toxic dUTP intermediate. The protein is dCTP deaminase, dUMP-forming of Methanococcus vannielii (strain ATCC 35089 / DSM 1224 / JCM 13029 / OCM 148 / SB).